A 300-amino-acid chain; its full sequence is Transcription termination/antitermination protein NusG (300 aa).

Residues 1-99 (MSDPNVNDAI…EAEEPELDPI (99 aa)) are disordered. Composition is skewed to acidic residues over residues 14–41 (ESVEDELGTVEGADNEDTEASAEAEAAD) and 47–97 (ETDE…PELD).

Belongs to the NusG family.

Participates in transcription elongation, termination and antitermination. The polypeptide is Transcription termination/antitermination protein NusG (Streptomyces coelicolor (strain ATCC BAA-471 / A3(2) / M145)).